The following is a 176-amino-acid chain: Large ribosomal subunit protein uL22 (176 aa).

A disordered region spans residues 113–176 (VVESRPSKDQ…EISEAKGGSD (64 aa)). The span at 136 to 152 (SKAAATAPAKKSSASKA) shows a compositional bias: low complexity. Residues 159 to 176 (TKAESKTSEISEAKGGSD) show a composition bias toward basic and acidic residues.

Belongs to the universal ribosomal protein uL22 family. As to quaternary structure, part of the 50S ribosomal subunit.

Functionally, this protein binds specifically to 23S rRNA; its binding is stimulated by other ribosomal proteins, e.g. L4, L17, and L20. It is important during the early stages of 50S assembly. It makes multiple contacts with different domains of the 23S rRNA in the assembled 50S subunit and ribosome. In terms of biological role, the globular domain of the protein is located near the polypeptide exit tunnel on the outside of the subunit, while an extended beta-hairpin is found that lines the wall of the exit tunnel in the center of the 70S ribosome. In Mycobacterium ulcerans (strain Agy99), this protein is Large ribosomal subunit protein uL22.